Reading from the N-terminus, the 625-residue chain is Thrombopoietin receptor (625 aa).

The first 25 residues, 1–25 (MPSWALFMVTSCLLLALPNQAQVTS), serve as a signal peptide directing secretion. The Extracellular segment spans residues 26-482 (QDVFLLALGT…RVSTGSETAW (457 aa)). An N-linked (GlcNAc...) asparagine glycan is attached at Asn-117. Fibronectin type-III domains follow at residues 178 to 270 (NATA…PVTV) and 383 to 479 (PTPS…TGSE). A WSXWS motif motif is present at residues 465-469 (WSAWS). Residues 483 to 504 (ITLVTALLLVLSLSALLGLLLL) form a helical membrane-spanning segment. The Cytoplasmic segment spans residues 505–625 (KWQFPAHYRR…YLPLSYWQQP (121 aa)). The Box 1 motif motif lies at 519-527 (LWPSLPDLH). Glycyl lysine isopeptide (Lys-Gly) (interchain with G-Cter in ubiquitin) cross-links involve residues Lys-544 and Lys-564. Residues Tyr-616 and Tyr-621 each carry the phosphotyrosine modification.

Belongs to the type I cytokine receptor family. Type 1 subfamily. Homodimer. Interacts with ATXN2L. Interacts with JAK2 and TYK2; these interactions increase MPL localization to the cell membrane. Interacts with THPO. Interacts with SHIP/INPP5D. Interacts with kinases BTK and SYK. Ubiquitination at Lys-544 and Lys-564 targets MPL for degradation by both the lysosomal and proteasomal pathways. The E3 ubiquitin-protein ligase CBL significantly contributes to this ubiquitination.

It is found in the cell membrane. The protein localises to the golgi apparatus. Its subcellular location is the cell surface. Functionally, receptor for thrombopoietin that regulates hematopoietic stem cell renewal, megakaryocyte differentiation, and platelet formation. Upon activation by THPO, induces rapid tyrosine phosphorylation and activation of JAK2, providing docking sites for many signaling proteins such as STAT5, SHIP/INPP5D, GRB2, SOS1 and PI3K. In turn, These signaling cascades lead to the proliferation, survival, and differentiation of megakaryocytes, ultimately leading to increased platelet production. Acts as an inhibitor of thrombopoietin signaling by promoting protein down-regulation of full-length isoform Mpl-fl. The protein is Thrombopoietin receptor (Mpl) of Mus musculus (Mouse).